Consider the following 162-residue polypeptide: uncharacterized protein (162 aa).

The interval Met-1–Ile-49 is disordered. Positions Ser-32–Asp-46 are enriched in polar residues. A helical transmembrane segment spans residues Met-62 to Ile-82.

It localises to the membrane. This is an uncharacterized protein from Homo sapiens (Human).